A 506-amino-acid polypeptide reads, in one-letter code: Maturase K (506 aa).

Belongs to the intron maturase 2 family. MatK subfamily.

The protein localises to the plastid. It is found in the chloroplast. Its function is as follows. Usually encoded in the trnK tRNA gene intron. Probably assists in splicing its own and other chloroplast group II introns. The chain is Maturase K from Trifolium striatum (Knotted clover).